The sequence spans 344 residues: L-rhamnose-proton symporter (344 aa).

10 consecutive transmembrane segments (helical) span residues Ala4 to Ala24, Trp38 to Leu58, Phe68 to Ile88, Met101 to Ile121, Thr137 to Leu157, Leu175 to Ala195, Leu214 to Ile234, Val259 to Gly279, Ile290 to Leu310, and Val323 to Ala343.

The protein belongs to the L-rhamnose transporter (TC 2.A.7.6) family.

It is found in the cell inner membrane. The enzyme catalyses L-rhamnopyranose(in) + H(+)(in) = L-rhamnopyranose(out) + H(+)(out). In terms of biological role, uptake of L-rhamnose across the cytoplasmic membrane with the concomitant transport of protons into the cell (symport system). The polypeptide is L-rhamnose-proton symporter (Escherichia coli (strain ATCC 8739 / DSM 1576 / NBRC 3972 / NCIMB 8545 / WDCM 00012 / Crooks)).